A 124-amino-acid chain; its full sequence is Small ribosomal subunit protein uS11 (124 aa).

The interval 102–124 (RIGRIEDATPIPHDGTTPKRKNR) is disordered.

The protein belongs to the universal ribosomal protein uS11 family. Part of the 30S ribosomal subunit.

Functionally, located on the platform of the 30S subunit. This is Small ribosomal subunit protein uS11 from Methanococcus maripaludis (strain C5 / ATCC BAA-1333).